A 1065-amino-acid polypeptide reads, in one-letter code: Exportin-T (1065 aa).

The protein belongs to the exportin family.

The protein resides in the nucleus. Its subcellular location is the cytoplasm. Functionally, tRNA nucleus export receptor which facilitates tRNA translocation across the nuclear pore complex. Involved in pre-tRNA splicing, probably by affecting the interaction of pre-tRNA with splicing endonuclease. The polypeptide is Exportin-T (LOS1) (Coprinopsis cinerea (strain Okayama-7 / 130 / ATCC MYA-4618 / FGSC 9003) (Inky cap fungus)).